Here is a 426-residue protein sequence, read N- to C-terminus: Zinc finger protein 662 (426 aa).

Residues 1–44 form the KRAB domain; the sequence is MLENYGAVASLAAFPFPKPALISQLERGETPWCSVPRGALDGEA. C2H2-type zinc fingers lie at residues 192–214, 220–242, 248–270, 276–298, 304–326, 332–354, 360–382, and 388–410; these read YICEECGKCFDQNEDFDQHQKTH, YGCKECGKAFSFRSHCIAHQRIH, YECQECAKAFVWKSNLIRHQRIH, FECKECGKGFSQNTSLTQHQRIH, YTCKECGKSFTRNPALLRHQRMH, YECKDCGKGFMWNSDLSQHQRVH, HECTDCGKSFFCKAHLIRHQRIH, and YKCNDCGKAFSQNSVLIKHQRRH.

It belongs to the krueppel C2H2-type zinc-finger protein family.

The protein resides in the nucleus. Its function is as follows. May be involved in transcriptional regulation. The sequence is that of Zinc finger protein 662 (ZNF662) from Homo sapiens (Human).